Here is a 564-residue protein sequence, read N- to C-terminus: E3 ubiquitin-protein ligase TRIM16 (564 aa).

Residues methionine 1–glycine 70 are disordered. Positions serine 24–proline 39 are enriched in low complexity. 2 B box-type zinc fingers span residues glycine 72 to proline 122 and histidine 126 to leucine 165. Residue serine 116 is modified to Phosphoserine. Residues cysteine 131, histidine 134, cysteine 153, and histidine 157 each contribute to the Zn(2+) site. Coiled-coil stretches lie at residues leucine 165–serine 203, alanine 243–alanine 274, and histidine 320–glutamate 340. Serine 203 is modified (phosphoserine). The 199-residue stretch at tyrosine 355 to glutamate 553 folds into the B30.2/SPRY domain.

This sequence belongs to the TRIM/RBCC family. As to quaternary structure, homodimerizes via its coiled-coil domain. Heterodimerizes with MID1, TRIM24 and PML. Interacts with Galectin-3/LGALS3 in a ULK1-dependent manner; this interaction mediates autophagy of damage endomembranes. Interacts with BECN1. Interacts with ATG16L1. Interacts with p62/SQSTM and LC3B/MAP1LC3B. Post-translationally, phosphorylated by ULK1. Auto-ubiquitinates via its B-Boxes.

It localises to the cytoplasm. It carries out the reaction S-ubiquitinyl-[E2 ubiquitin-conjugating enzyme]-L-cysteine + [acceptor protein]-L-lysine = [E2 ubiquitin-conjugating enzyme]-L-cysteine + N(6)-ubiquitinyl-[acceptor protein]-L-lysine.. E3 ubiquitin ligase that plays an essential role in the organization of autophagic response and ubiquitination upon lysosomal and phagosomal damages. Plays a role in the stress-induced biogenesis and degradation of protein aggresomes by regulating the p62-KEAP1-NRF2 signaling and particularly by modulating the ubiquitination levels and thus stability of NRF2. Acts as a scaffold protein and facilitates autophagic degradation of protein aggregates by interacting with p62/SQSTM, ATG16L1 and LC3B/MAP1LC3B. In turn, protects the cell against oxidative stress-induced cell death as a consequence of endomembrane damage. This chain is E3 ubiquitin-protein ligase TRIM16 (TRIM16), found in Pongo abelii (Sumatran orangutan).